Here is a 635-residue protein sequence, read N- to C-terminus: Threonine--tRNA ligase (635 aa).

In terms of domain architecture, TGS spans 1–61 (MIKITLKDGK…HKDSSLEILT (61 aa)). The interval 242–532 (DHRKLGKELD…LIEQYAGAFP (291 aa)) is catalytic. Positions 333, 384, and 509 each coordinate Zn(2+).

Belongs to the class-II aminoacyl-tRNA synthetase family. Homodimer. Requires Zn(2+) as cofactor.

It localises to the cytoplasm. The enzyme catalyses tRNA(Thr) + L-threonine + ATP = L-threonyl-tRNA(Thr) + AMP + diphosphate + H(+). Functionally, catalyzes the attachment of threonine to tRNA(Thr) in a two-step reaction: L-threonine is first activated by ATP to form Thr-AMP and then transferred to the acceptor end of tRNA(Thr). Also edits incorrectly charged L-seryl-tRNA(Thr). In Clostridium botulinum (strain Loch Maree / Type A3), this protein is Threonine--tRNA ligase.